The sequence spans 315 residues: Acetyl-coenzyme A carboxylase carboxyl transferase subunit alpha (315 aa).

In terms of domain architecture, CoA carboxyltransferase C-terminal spans 39-292; it reads LEDKSAKLLR…GDALEQELNG (254 aa).

It belongs to the AccA family. In terms of assembly, acetyl-CoA carboxylase is a heterohexamer composed of biotin carboxyl carrier protein (AccB), biotin carboxylase (AccC) and two subunits each of ACCase subunit alpha (AccA) and ACCase subunit beta (AccD).

It is found in the cytoplasm. The enzyme catalyses N(6)-carboxybiotinyl-L-lysyl-[protein] + acetyl-CoA = N(6)-biotinyl-L-lysyl-[protein] + malonyl-CoA. The protein operates within lipid metabolism; malonyl-CoA biosynthesis; malonyl-CoA from acetyl-CoA: step 1/1. In terms of biological role, component of the acetyl coenzyme A carboxylase (ACC) complex. First, biotin carboxylase catalyzes the carboxylation of biotin on its carrier protein (BCCP) and then the CO(2) group is transferred by the carboxyltransferase to acetyl-CoA to form malonyl-CoA. The polypeptide is Acetyl-coenzyme A carboxylase carboxyl transferase subunit alpha (Sphingopyxis alaskensis (strain DSM 13593 / LMG 18877 / RB2256) (Sphingomonas alaskensis)).